Here is a 319-residue protein sequence, read N- to C-terminus: Beta-xylosidase (319 aa).

Aspartate 14 acts as the Proton acceptor in catalysis. The active-site Proton donor is the glutamate 222.

The protein belongs to the glycosyl hydrolase 43 family.

It carries out the reaction Hydrolysis of (1-&gt;4)-beta-D-xylans, to remove successive D-xylose residues from the non-reducing termini.. Its function is as follows. Exoxylanase capable of acting on certain xylans and xylooligosaccharides. This Xylanibacter ruminicola (Prevotella ruminicola) protein is Beta-xylosidase (xynB).